An 810-amino-acid chain; its full sequence is MIPVTELRYFADTQPAYRILKPWWDVFTDYISIVMLMIAVFGGTLQVTQDKMICLPCKWVTKDSCNDSFRGWGASSPEPTYPNSTVLPTPDTGPTGIKYDLDRHQYNYVDAVCYENRLHWFAKYFPYLVLLHTLIFLACSNFWFKFPRTSSKLEHFVSILLKCFDSPWTTRALSETVVEESDPKPAFSKMNGSMDKKSSTVSEDVEATVPMLQRTKSRIEQGIVDRSETGVLDKKEGEQAKALFEKVKKFRTHVEEGDIVYRLYMRQTIIKVIKFFLIICYTVYYVHNIKFDVDCTVDIESLTGYRTYRCAHPLATLFKILASFYISLVIFYGLICMYTLWWMLRRSLKKYSFESIREESSYSDIPDVKNDFAFMLHLIDQYDPLYSKRFAVFLSEVSENKLRQLNLNNEWTLDKLRQRLTKNAQDKLELHLFMLSGIPDTVFDLLELEVLKLELIPDVTIPPSIAQLTGLKELWLYHTAAKIEAPALAFLRENLRALHIKFTDIKEIPLWIYSLKTLEELHLTGNLSAENNRYIVIDGLRELKRLKVLRLKSNLSKLPQVVTDVGVHLQKLSINNEGTKLIVLNSLKKMVNLTELELIRCDLERIPHSIFSLHNLQEIDLKDNNLKTIEEIISFQHLHRLTCLKLWYNHIAYIPIQIGNLTNLERLYLNRNKIEKIPTQLFYCRKLRYLDLSHNNLTLLPADIGLLQNLQNLAVTANRIEALPPELFQCRKLRALHLGNNVLQSLPSRVGELTNLTQIELRGNRLECLPVELGECPLLKRSGLVVEEDLFSTLPPEVKERLWRADKEQA.

M1 is modified (N-acetylmethionine). At 1–22 (MIPVTELRYFADTQPAYRILKP) the chain is on the cytoplasmic side. A helical membrane pass occupies residues 23-47 (WWDVFTDYISIVMLMIAVFGGTLQV). The Extracellular portion of the chain corresponds to 48–123 (TQDKMICLPC…YENRLHWFAK (76 aa)). 3 disulfide bridges follow: C54–C310, C57–C65, and C113–C295. N-linked (GlcNAc...) asparagine glycans are attached at residues N66 and N83. A helical membrane pass occupies residues 124–142 (YFPYLVLLHTLIFLACSNF). Over 143-264 (WFKFPRTSSK…EEGDIVYRLY (122 aa)) the chain is Cytoplasmic. At T200 the chain carries Phosphothreonine. Phosphoserine is present on S202. Phosphothreonine is present on T215. Phosphoserine is present on S217. A helical transmembrane segment spans residues 265 to 286 (MRQTIIKVIKFFLIICYTVYYV). At 287–316 (HNIKFDVDCTVDIESLTGYRTYRCAHPLAT) the chain is on the extracellular side. Residues 317-341 (LFKILASFYISLVIFYGLICMYTLW) form a helical membrane-spanning segment. At 342–810 (WMLRRSLKKY…RLWRADKEQA (469 aa)) the chain is on the cytoplasmic side. LRR repeat units lie at residues 399–422 (ENKL…RLTK), 423–445 (NAQD…VFDL), 447–468 (ELEV…IAQL), 469–492 (TGLK…AFLR), 493–515 (ENLR…IYSL), 518–542 (LEEL…GLRE), 543–565 (LKRL…VTDV), 567–589 (VHLQ…SLKK), 590–613 (MVNL…IFSL), 614–637 (HNLQ…SFQH), 639–661 (HRLT…IGNL), 662–684 (TNLE…LFYC), 686–707 (KLRY…IGLL), 708–730 (QNLQ…LFQC), 732–753 (KLRA…VGEL), 754–776 (TNLT…LGEC), and 778–801 (LLKR…VKER). The Di-leucine motif signature appears at 706 to 707 (LL).

It belongs to the LRRC8 family. As to quaternary structure, heterohexamer; oligomerizes with other LRRC8 proteins (LRRC8B, LRRC8C, LRRC8D and/or LRRC8E) to form a heterohexamer. Can form homohexamers in vitro, but these have lower conductance than heterohexamers. Detected in a channel complex that contains LRRC8A, LRRC8C and LRRC8E. In vivo, the subunit composition may depend primarily on expression levels, and heterooligomeric channels containing various proportions of the different LRRC8 proteins may coexist. Interact with GRB2. Interacts with NOX4; this interaction prevents the ubiquitin-mediated degradation of LRRC8A. N-glycosylated.

Its subcellular location is the cell membrane. The protein resides in the lysosome membrane. The enzyme catalyses chloride(in) = chloride(out). It carries out the reaction iodide(out) = iodide(in). The catalysed reaction is taurine(out) = taurine(in). It catalyses the reaction L-aspartate(out) = L-aspartate(in). The enzyme catalyses L-glutamate(out) = L-glutamate(in). It carries out the reaction myo-inositol(out) = myo-inositol(in). The catalysed reaction is 2',3'-cGAMP(out) = 2',3'-cGAMP(in). Its activity is regulated as follows. Inhibited by (4-[(2-butyl-6,7-dichloro-2-cyclopentyl-2,3-dihydro-1-oxo-1H-inden-5-yl)oxy]butanoic acid), which plugs the channel like a cork in a bottle by binding in the extracellular selectivity filter and sterically occluding ion conduction. Lipids may block conduction in closed heterohexameric channels. Its function is as follows. Essential component of the volume-regulated anion channel (VRAC, also named VSOAC channel), an anion channel required to maintain a constant cell volume in response to extracellular or intracellular osmotic changes. The VRAC channel conducts iodide better than chloride and can also conduct organic osmolytes like taurine. Mediates efflux of amino acids, such as aspartate and glutamate, in response to osmotic stress. In complex with LRRC8C or LRRC8E, acts as a transporter of immunoreactive cyclic dinucleotide GMP-AMP (2'-3'-cGAMP), an immune messenger produced in response to DNA virus in the cytosol: mediates both import and export of 2'-3'-cGAMP, thereby promoting transfer of 2'-3'-cGAMP to bystander cells. In contrast, complexes containing LRRC8D inhibit transport of 2'-3'-cGAMP. Required for in vivo channel activity, together with at least one other family member (LRRC8B, LRRC8C, LRRC8D or LRRC8E); channel characteristics depend on the precise subunit composition. Can form functional channels by itself (in vitro). Involved in B-cell development: required for the pro-B cell to pre-B cell transition. Also required for T-cell development. Required for myoblast differentiation: VRAC activity promotes membrane hyperpolarization and regulates insulin-stimulated glucose metabolism and oxygen consumption. Also acts as a regulator of glucose-sensing in pancreatic beta cells: VRAC currents, generated in response to hypotonicity- or glucose-induced beta cell swelling, depolarize cells, thereby causing electrical excitation, leading to increase glucose sensitivity and insulin secretion. Also plays a role in lysosome homeostasis by forming functional lysosomal VRAC channels in response to low cytoplasmic ionic strength condition: lysosomal VRAC channels are necessary for the formation of large lysosome-derived vacuoles, which store and then expel excess water to maintain cytosolic water homeostasis. Acts as a key factor in NLRP3 inflammasome activation by modulating itaconate efflux and mitochondria function. In Rattus norvegicus (Rat), this protein is Volume-regulated anion channel subunit LRRC8A.